Here is a 1782-residue protein sequence, read N- to C-terminus: Signal-induced proliferation-associated 1-like protein 1 (1782 aa).

3 disordered regions span residues 1–28 (MTSLKRSQTERPVTADRASVVSTDGAPK), 47–125 (GSSV…VSLN), and 140–171 (KNKTGPAESMDSRFLMPEAYPSSPRKALRRIR). Residues 84-94 (PPRKENVKESS) are compositionally biased toward basic and acidic residues. Over residues 95-125 (RSSQEIETSSCLESLSSKGSPVSQGSSVSLN) the composition is skewed to low complexity. 6 positions are modified to phosphoserine: serine 162, serine 187, serine 193, serine 208, serine 255, and serine 288. A disordered region spans residues 277–297 (EREKPLKRRSKSETGDSSIFR). Residues 599-816 (LMKLDEQGLN…RTRQEYLKDL (218 aa)) enclose the Rap-GAP domain. The 79-residue stretch at 953–1031 (EMTLRRNGLG…VVIIPPHDDC (79 aa)) folds into the PDZ domain. 2 disordered regions span residues 1069–1128 (QRNA…RLSP) and 1144–1213 (SQCR…SLAD). 7 positions are modified to phosphoserine: serine 1078, serine 1087, serine 1116, serine 1127, serine 1149, serine 1170, and serine 1181. Residues 1080–1093 (QVPSQLQSPMTSRL) are compositionally biased toward polar residues. The segment covering 1149–1159 (SPSNLSSSSET) has biased composition (low complexity). Over residues 1186–1205 (DRQNTQSDISGSGKSTPSWQ) the composition is skewed to polar residues. Serine 1234 and serine 1249 each carry phosphoserine. Positions 1247–1285 (HLSPNKQGHSDSHYSSHSSSNTLSSNASSAHSDEKWYDG) are disordered. Over residues 1261–1276 (SSHSSSNTLSSNASSA) the composition is skewed to low complexity. Serine 1305 is subject to Phosphoserine; by PLK2. The interval 1307–1342 (IDTASYGPSHGSTASLGASTSSPRSGPGKEKVAPLW) is disordered. Threonine 1309 bears the Phosphothreonine; by PLK2 mark. Residues 1315–1328 (SHGSTASLGASTSS) are compositionally biased toward low complexity. Serine 1328 bears the Phosphoserine; by CDK5 mark. Serine 1345 bears the Phosphoserine mark. Residues 1358-1368 (TEGHGMDRKAE) show a composition bias toward basic and acidic residues. The segment at 1358 to 1454 (TEGHGMDRKA…SSSGPRTFYP (97 aa)) is disordered. Serine 1369, serine 1370, serine 1391, serine 1410, and serine 1412 each carry phosphoserine. Residues 1378 to 1410 (KSQGGSSPLSRENSTFSINDAASHTSTMSSRHS) show a composition bias toward polar residues. Residues 1432–1447 (SSQLAPSFSSSSSSSS) show a composition bias toward low complexity. Phosphoserine occurs at positions 1507 and 1528. Threonine 1530 is subject to Phosphothreonine. Phosphoserine is present on residues serine 1533, serine 1544, serine 1547, serine 1564, and serine 1567. The residue at position 1580 (arginine 1580) is an Asymmetric dimethylarginine. Serine 1582, serine 1624, serine 1626, serine 1629, serine 1687, serine 1690, serine 1707, serine 1708, and serine 1712 each carry phosphoserine. The disordered stretch occupies residues 1625–1647 (ASDSSLTDIQETRRQPIPDPGLM). Positions 1713–1773 (PTLASKVDQL…ASDKLKKFTE (61 aa)) form a coiled coil.

As to quaternary structure, interacts with DLG4, PDLIM5, PDLIM7 and LZTS3. Interacts with the actin cytoskeleton. Interacts (via PDZ domain) with EPHA4 (via PDZ motif); controls neuronal morphology through regulation of the RAP1 (RAP1A or RAP1B) and RAP2 (RAP2A, RAP2B or RAP2C) GTPases. Ubiquitinated and degraded by the SCF(BTRC) following phosphorylation by PLK2. Post-translationally, phosphorylated at Ser-1328 by CDK5, creating a docking site for the POLO box domains of PLK2. Subsequently, PLK2 binds and phosphorylates SIPA1L1, leading to ubiquitination and degradation by the proteasome.

The protein localises to the cytoplasm. The protein resides in the cytoskeleton. It localises to the postsynaptic density. Its subcellular location is the synapse. It is found in the synaptosome. In terms of biological role, stimulates the GTPase activity of RAP2A. Promotes reorganization of the actin cytoskeleton and recruits DLG4 to F-actin. Contributes to the regulation of dendritic spine morphogenesis. In Mus musculus (Mouse), this protein is Signal-induced proliferation-associated 1-like protein 1 (Sipa1l1).